The chain runs to 213 residues: Holliday junction branch migration complex subunit RuvA (213 aa).

The segment at 1-64 is domain I; sequence MIASVTGEVA…DEAPLLFGFA (64 aa). Residues 65-143 are domain II; it reads QGDEKEIFTV…LPEPPVQQAN (79 aa). The interval 144 to 152 is flexible linker; the sequence is QPQVPVWRD. A domain III region spans residues 152–213; that stretch reads DQVVDALTGL…GTTHAPTGRR (62 aa).

This sequence belongs to the RuvA family. Homotetramer. Forms an RuvA(8)-RuvB(12)-Holliday junction (HJ) complex. HJ DNA is sandwiched between 2 RuvA tetramers; dsDNA enters through RuvA and exits via RuvB. An RuvB hexamer assembles on each DNA strand where it exits the tetramer. Each RuvB hexamer is contacted by two RuvA subunits (via domain III) on 2 adjacent RuvB subunits; this complex drives branch migration. In the full resolvosome a probable DNA-RuvA(4)-RuvB(12)-RuvC(2) complex forms which resolves the HJ.

The protein localises to the cytoplasm. Functionally, the RuvA-RuvB-RuvC complex processes Holliday junction (HJ) DNA during genetic recombination and DNA repair, while the RuvA-RuvB complex plays an important role in the rescue of blocked DNA replication forks via replication fork reversal (RFR). RuvA specifically binds to HJ cruciform DNA, conferring on it an open structure. The RuvB hexamer acts as an ATP-dependent pump, pulling dsDNA into and through the RuvAB complex. HJ branch migration allows RuvC to scan DNA until it finds its consensus sequence, where it cleaves and resolves the cruciform DNA. The sequence is that of Holliday junction branch migration complex subunit RuvA from Kocuria rhizophila (strain ATCC 9341 / DSM 348 / NBRC 103217 / DC2201).